The following is a 575-amino-acid chain: Phosphoenolpyruvate-protein phosphotransferase (575 aa).

Tyrosine 122 is subject to Phosphotyrosine. Residue histidine 189 is the Tele-phosphohistidine intermediate of the active site. Phosphoenolpyruvate is bound by residues arginine 296 and arginine 332. Residues glutamate 431 and aspartate 455 each contribute to the Mg(2+) site. Residues 454 to 455 and arginine 465 contribute to the phosphoenolpyruvate site; that span reads ND. The active-site Proton donor is cysteine 502.

Belongs to the PEP-utilizing enzyme family. In terms of assembly, homodimer. Interacts with the pole-localizer protein TmaR. Binding to TmaR is reversible as long as TmaR can get phosphorylated, whereas binding to non-phosphorylated TmaR is very strong and shifts the equilibrium toward binding. The cofactor is Mg(2+). Phosphorylated on Tyr-122. Phosphorylation on Tyr-122 is important for polar localization but not for interaction with TmaR and for activity.

It is found in the cytoplasm. It catalyses the reaction L-histidyl-[protein] + phosphoenolpyruvate = N(pros)-phospho-L-histidyl-[protein] + pyruvate. Inhibited by oxalate. In terms of biological role, general (non sugar-specific) component of the phosphoenolpyruvate-dependent sugar phosphotransferase system (sugar PTS). This major carbohydrate active-transport system catalyzes the phosphorylation of incoming sugar substrates concomitantly with their translocation across the cell membrane. Enzyme I transfers the phosphoryl group from phosphoenolpyruvate (PEP) to the phosphoryl carrier protein (HPr). Can also use (Z)-3-fluoro-PEP (ZFPEP), (Z)-3-methyl-PEP (ZMePEP), (Z)-3-chloro-PEP (ZClPEP) and (E)-3-chloro-PEP (EClPEP) as alternative phosphoryl donors. The polypeptide is Phosphoenolpyruvate-protein phosphotransferase (Escherichia coli (strain K12)).